An 86-amino-acid polypeptide reads, in one-letter code: MNSKIFAVLLLLALLSCVLSDQYCPKSSITACKKMNIRNDCCKDDDCTGGSWCCATPCGNFCKYPTDRPGGKRAAGGKSCKTGYVY.

Residues 1-20 (MNSKIFAVLLLLALLSCVLS) form the signal peptide. One can recognise a WAP domain in the interval 21–66 (DQYCPKSSITACKKMNIRNDCCKDDDCTGGSWCCATPCGNFCKYPT). 5 cysteine pairs are disulfide-bonded: C24-C54, C32-C58, C41-C53, C42-C80, and C47-C62.

Belongs to the venom protein 11 family. 01 (wap-1) subfamily. Contains 5 disulfide bonds. As to expression, expressed by the venom gland.

Its subcellular location is the secreted. In terms of biological role, has antibacterial activity. This chain is U15-lycotoxin-Ls1d, found in Lycosa singoriensis (Wolf spider).